Consider the following 130-residue polypeptide: Small ribosomal subunit protein uS11c (130 aa).

This sequence belongs to the universal ribosomal protein uS11 family. As to quaternary structure, part of the 30S ribosomal subunit.

It is found in the plastid. The protein localises to the chloroplast. The protein is Small ribosomal subunit protein uS11c of Marchantia polymorpha (Common liverwort).